The following is a 145-amino-acid chain: Ribosomal RNA large subunit methyltransferase H (145 aa).

S-adenosyl-L-methionine-binding positions include Leu-68, Gly-95, and 113–118; that span reads FSKMTF.

The protein belongs to the RNA methyltransferase RlmH family. Homodimer.

The protein resides in the cytoplasm. The enzyme catalyses pseudouridine(1915) in 23S rRNA + S-adenosyl-L-methionine = N(3)-methylpseudouridine(1915) in 23S rRNA + S-adenosyl-L-homocysteine + H(+). In terms of biological role, specifically methylates the pseudouridine at position 1915 (m3Psi1915) in 23S rRNA. This Mycoplasmopsis pulmonis (strain UAB CTIP) (Mycoplasma pulmonis) protein is Ribosomal RNA large subunit methyltransferase H.